A 595-amino-acid polypeptide reads, in one-letter code: Aspartate--tRNA ligase (595 aa).

Position 176 (glutamate 176) interacts with L-aspartate. The tract at residues 200-203 is aspartate; that stretch reads QIFK. Arginine 222 serves as a coordination point for L-aspartate. ATP is bound by residues 222 to 224 and glutamine 231; that span reads RDE. L-aspartate is bound at residue histidine 450. Glutamate 484 serves as a coordination point for ATP. L-aspartate is bound at residue arginine 491. 536–539 is an ATP binding site; it reads GLDR.

It belongs to the class-II aminoacyl-tRNA synthetase family. Type 1 subfamily. In terms of assembly, homodimer.

The protein resides in the cytoplasm. The catalysed reaction is tRNA(Asp) + L-aspartate + ATP = L-aspartyl-tRNA(Asp) + AMP + diphosphate. Functionally, catalyzes the attachment of L-aspartate to tRNA(Asp) in a two-step reaction: L-aspartate is first activated by ATP to form Asp-AMP and then transferred to the acceptor end of tRNA(Asp). The sequence is that of Aspartate--tRNA ligase from Halalkalibacterium halodurans (strain ATCC BAA-125 / DSM 18197 / FERM 7344 / JCM 9153 / C-125) (Bacillus halodurans).